The sequence spans 364 residues: MELFKYMEKYDYEQLVFCQDEQSGLKAIIAIHDTTLGPALGGTRMWTYENEEAAIEDALRLARGMTYKNAAAGLNLGGGKTVIIGDPRKDKNEEMFRAFGRYIQGLNGRYITAEDVGTTVEDMDIIHDETDYVTGISPAFGSSGNPSPVTAYGVYRGMKAAAKAAFGTDSLEGKTIAVQGVGNVAYNLCRHLHEEGANLIVTDINKQSVQRAVEDFGARAVDPDDIYSQDCDIYAPCALGATINDDTIKQLKAKVIAGAANNQLKETRHGDQIHEMGIVYAPDYVINAGGVINVADELYGYNAERALKKVEGIYGNIERVLEISQRDGIPAYLAADRLAEERIERMRRSRSQFLQNGHSVLSRR.

Lys-80 is a catalytic residue. Residue 180–186 (GVGNVAY) coordinates NAD(+).

Belongs to the Glu/Leu/Phe/Val dehydrogenases family.

It catalyses the reaction L-leucine + NAD(+) + H2O = 4-methyl-2-oxopentanoate + NH4(+) + NADH + H(+). The protein operates within amino-acid degradation; L-leucine degradation; 4-methyl-2-oxopentanoate from L-leucine (dehydrogenase route): step 1/1. Catalyzes the reversible deamination of L-leucine to 4-methyl-2-oxopentanoate. This is Leucine dehydrogenase (yqiT) from Bacillus subtilis (strain 168).